Reading from the N-terminus, the 152-residue chain is Protein-export protein SecB (152 aa).

Belongs to the SecB family. As to quaternary structure, homotetramer, a dimer of dimers. One homotetramer interacts with 1 SecA dimer.

The protein resides in the cytoplasm. Functionally, one of the proteins required for the normal export of preproteins out of the cell cytoplasm. It is a molecular chaperone that binds to a subset of precursor proteins, maintaining them in a translocation-competent state. It also specifically binds to its receptor SecA. The sequence is that of Protein-export protein SecB from Dechloromonas aromatica (strain RCB).